A 226-amino-acid chain; its full sequence is Endonuclease V (226 aa).

2 residues coordinate Mg(2+): Asp-43 and Asp-109.

The protein belongs to the endonuclease V family. Mg(2+) serves as cofactor.

It is found in the cytoplasm. It catalyses the reaction Endonucleolytic cleavage at apurinic or apyrimidinic sites to products with a 5'-phosphate.. Its function is as follows. DNA repair enzyme involved in the repair of deaminated bases. Selectively cleaves double-stranded DNA at the second phosphodiester bond 3' to a deoxyinosine leaving behind the intact lesion on the nicked DNA. This Kosmotoga olearia (strain ATCC BAA-1733 / DSM 21960 / TBF 19.5.1) protein is Endonuclease V.